Here is a 207-residue protein sequence, read N- to C-terminus: Ras-related protein Rab-8A (207 aa).

Ser-17, Gly-18, Val-19, Gly-20, Lys-21, Thr-22, Cys-23, Ser-35, Ser-39, and Thr-40 together coordinate GTP. Thr-22 provides a ligand contact to Mg(2+). Short sequence motifs (switch) lie at residues 31–45 (DAFN…GIDF) and 63–80 (DTAG…YYRG). 2 residues coordinate Mg(2+): Thr-40 and Asp-63. Residue Gly-66 coordinates GTP. Thr-72 is subject to Phosphothreonine; by LRRK2. GTP contacts are provided by Asn-121, Lys-122, Asp-124, Ala-152, and Lys-153. Phosphoserine is present on residues Ser-181 and Ser-185. Cysteine methyl ester is present on Cys-204. Cys-204 carries S-geranylgeranyl cysteine lipidation. Residues 205 to 207 (SLL) constitute a propeptide, removed in mature form.

Belongs to the small GTPase superfamily. Rab family. In terms of assembly, interacts (GTP-bound form) with MICALL1; regulates RAB8A association with recycling endosomes. Interacts with MICALL2; competes with RAB13 and is involved in E-cadherin endocytic recycling. Interacts (GTP-bound form) with MICAL1, MICALCL, MICAL3 and EHBP1L1; two molecules of RAB8A can bind to one molecule of the effector protein; ternary complexes of RAB8A, RAB13 and either MICAL1 or EHBP1L1 are possible. Interacts (GTP-bound form) with EHBP1. Interacts with EHD1. Interacts with MAP4K2 and SYTL4. Interacts with SGSM1 and SGSM3. Interacts with RABIF, RIMS2, RPH3A and RPH3A. Interacts with OPTN. Interacts with MYO5B. Interacts with CIMAP3. Interacts with BIRC6/bruce. Interacts with OCRL. Interacts with AHI1. Interacts with DCDC1. Interacts with LRRK2; interaction facilitates phosphorylation of Thr-72. Interacts with RAB31P, GDI1, GDI2, CHM, CHML, RABGGTA, RABGGTB, TBC1D15 and INPP5B; these interactions are dependent on Thr-72 not being phosphorylated. Interacts with RILPL1 and RILPL2; these interactions are dependent on the phosphorylation of Thr-72 by LRRK2. Interacts with DZIP1; prevents inhibition by the GDP-dissociation inhibitor GDI2. Interacts with RAB3IP/Rabin8, RAB3IP functions as guanine exchange factor (GEF) towards RAB8A. Interacts (in GDP-bound form) with RPGR, RPGR functions as GEF towards RAB8A. Mg(2+) serves as cofactor. Phosphorylation of Thr-72 in the switch II region by LRRK2 prevents the association of RAB regulatory proteins, including CHM, CHML and RAB GDP dissociation inhibitors GDI1 and GDI2. Phosphorylation by LRRK2 is required for localization to stressed lysosomes.

Its subcellular location is the cell membrane. The protein resides in the golgi apparatus. It localises to the endosome membrane. The protein localises to the recycling endosome membrane. It is found in the cell projection. Its subcellular location is the cilium. The protein resides in the cytoplasmic vesicle. It localises to the phagosome membrane. The protein localises to the cytoplasm. It is found in the cytoskeleton. Its subcellular location is the microtubule organizing center. The protein resides in the centrosome. It localises to the centriole. The protein localises to the cilium basal body. It is found in the midbody. Its subcellular location is the lysosome. The enzyme catalyses GTP + H2O = GDP + phosphate + H(+). With respect to regulation, regulated by guanine nucleotide exchange factors (GEFs) such as RAB3IP/Rabin8 and RPGR which promote the exchange of bound GDP for free GTP, GTPase activating proteins (GAPs) which increase the GTP hydrolysis activity, and GDP dissociation inhibitors (GDIs) which inhibit the dissociation of the nucleotide from the GTPase. Activated in response to insulin. Its function is as follows. The small GTPases Rab are key regulators of intracellular membrane trafficking, from the formation of transport vesicles to their fusion with membranes. Rabs cycle between an inactive GDP-bound form and an active GTP-bound form that is able to recruit to membranes different sets of downstream effectors directly responsible for vesicle formation, movement, tethering and fusion. RAB8A is involved in polarized vesicular trafficking and neurotransmitter release. Together with RAB11A, RAB3IP, the exocyst complex, PARD3, PRKCI, ANXA2, CDC42 and DNMBP promotes transcytosis of PODXL to the apical membrane initiation sites (AMIS), apical surface formation and lumenogenesis. Regulates the compacted morphology of the Golgi. Together with MYO5B and RAB11A participates in epithelial cell polarization. Also involved in membrane trafficking to the cilium and ciliogenesis. Together with MICALL2, may also regulate adherens junction assembly. May play a role in insulin-induced transport to the plasma membrane of the glucose transporter GLUT4 and therefore play a role in glucose homeostasis. Involved in autophagy. Participates in the export of a subset of neosynthesized proteins through a Rab8-Rab10-Rab11-dependent endososomal export route. Targeted to and stabilized on stressed lysosomes through LRRK2 phosphorylation. Suppresses stress-induced lysosomal enlargement through EHBP1 and EHNP1L1 effector proteins. This is Ras-related protein Rab-8A from Mus musculus (Mouse).